The following is a 175-amino-acid chain: Adenine phosphoribosyltransferase (175 aa).

The protein belongs to the purine/pyrimidine phosphoribosyltransferase family. Homodimer.

The protein resides in the cytoplasm. It carries out the reaction AMP + diphosphate = 5-phospho-alpha-D-ribose 1-diphosphate + adenine. The protein operates within purine metabolism; AMP biosynthesis via salvage pathway; AMP from adenine: step 1/1. Functionally, catalyzes a salvage reaction resulting in the formation of AMP, that is energically less costly than de novo synthesis. The sequence is that of Adenine phosphoribosyltransferase from Lacticaseibacillus paracasei (strain ATCC 334 / BCRC 17002 / CCUG 31169 / CIP 107868 / KCTC 3260 / NRRL B-441) (Lactobacillus paracasei).